Consider the following 777-residue polypeptide: Zinc finger FYVE domain-containing protein 1 (777 aa).

The tract at residues 416–777 (MAHSSFFPDE…FNCNKKPGDL (362 aa)) is required for localization in the lipid droplets. FYVE-type zinc fingers lie at residues 598 to 659 (NSQI…DARN) and 715 to 775 (DHEI…KKPG). 16 residues coordinate Zn(2+): cysteine 604, cysteine 607, cysteine 620, cysteine 623, cysteine 628, cysteine 631, cysteine 651, cysteine 654, cysteine 721, cysteine 724, cysteine 737, cysteine 740, cysteine 745, cysteine 748, cysteine 767, and cysteine 770.

As to quaternary structure, interacts with RAB18 (in GTP-bound form). Interacts with BSCL2 in a RAB18-dependent manner. Interacts with ZW10. In terms of tissue distribution, ubiquitous.

The protein localises to the golgi apparatus. It localises to the golgi stack. It is found in the endoplasmic reticulum. The protein resides in the preautophagosomal structure. Its subcellular location is the lipid droplet. The protein localises to the mitochondrion. In terms of biological role, plays a role in the formation of lipid droplets (LDs) which are storage organelles at the center of lipid and energy homeostasis. Regulates the morphology, size and distribution of LDs. Mediates the formation of endoplasmic reticulum-lipid droplets (ER-LD) contact sites by forming a complex with RAB18 and ZW10. Binds to phosphatidylinositol 3-phosphate (PtdIns3P) through FYVE-type zinc finger. The sequence is that of Zinc finger FYVE domain-containing protein 1 (Zfyve1) from Mus musculus (Mouse).